The chain runs to 152 residues: 3-dehydroquinate dehydratase (152 aa).

Catalysis depends on Y26, which acts as the Proton acceptor. The substrate site is built by N77, H83, and D90. Catalysis depends on H103, which acts as the Proton donor. Substrate is bound by residues 104–105 (LS) and R114.

The protein belongs to the type-II 3-dehydroquinase family. In terms of assembly, homododecamer.

It carries out the reaction 3-dehydroquinate = 3-dehydroshikimate + H2O. The protein operates within metabolic intermediate biosynthesis; chorismate biosynthesis; chorismate from D-erythrose 4-phosphate and phosphoenolpyruvate: step 3/7. Its function is as follows. Catalyzes a trans-dehydration via an enolate intermediate. The protein is 3-dehydroquinate dehydratase (aroQ) of Synechocystis sp. (strain ATCC 27184 / PCC 6803 / Kazusa).